Reading from the N-terminus, the 418-residue chain is Tryptophan synthase beta chain 1 (418 aa).

Residue Lys-99 is modified to N6-(pyridoxal phosphate)lysine.

The protein belongs to the TrpB family. Tetramer of two alpha and two beta chains. Pyridoxal 5'-phosphate is required as a cofactor.

It carries out the reaction (1S,2R)-1-C-(indol-3-yl)glycerol 3-phosphate + L-serine = D-glyceraldehyde 3-phosphate + L-tryptophan + H2O. It participates in amino-acid biosynthesis; L-tryptophan biosynthesis; L-tryptophan from chorismate: step 5/5. In terms of biological role, the beta subunit is responsible for the synthesis of L-tryptophan from indole and L-serine. This chain is Tryptophan synthase beta chain 1 (trpB1), found in Corynebacterium efficiens (strain DSM 44549 / YS-314 / AJ 12310 / JCM 11189 / NBRC 100395).